Here is a 184-residue protein sequence, read N- to C-terminus: Probable chorismate pyruvate-lyase 1 (184 aa).

Positions 70, 108, and 166 each coordinate substrate.

It belongs to the UbiC family.

The protein localises to the cytoplasm. It catalyses the reaction chorismate = 4-hydroxybenzoate + pyruvate. It participates in cofactor biosynthesis; ubiquinone biosynthesis. Functionally, removes the pyruvyl group from chorismate, with concomitant aromatization of the ring, to provide 4-hydroxybenzoate (4HB) for the ubiquinone pathway. The protein is Probable chorismate pyruvate-lyase 1 of Burkholderia pseudomallei (strain 1710b).